Consider the following 183-residue polypeptide: Holliday junction branch migration complex subunit RuvA (183 aa).

The domain I stretch occupies residues 1-63 (MIVGLIGVVE…EDAHLLYGFL (63 aa)). Positions 64-141 (EEGEKILFER…IQDETKPMHN (78 aa)) are domain II. Residue Asn-141 is a region of interest, flexible linker. The segment at 141 to 183 (NEVFLALESLGFKSAEINKVLKTLKPSLSIEAAIKEALQQLRS) is domain III.

This sequence belongs to the RuvA family. Homotetramer. Forms an RuvA(8)-RuvB(12)-Holliday junction (HJ) complex. HJ DNA is sandwiched between 2 RuvA tetramers; dsDNA enters through RuvA and exits via RuvB. An RuvB hexamer assembles on each DNA strand where it exits the tetramer. Each RuvB hexamer is contacted by two RuvA subunits (via domain III) on 2 adjacent RuvB subunits; this complex drives branch migration. In the full resolvosome a probable DNA-RuvA(4)-RuvB(12)-RuvC(2) complex forms which resolves the HJ.

The protein localises to the cytoplasm. The RuvA-RuvB-RuvC complex processes Holliday junction (HJ) DNA during genetic recombination and DNA repair, while the RuvA-RuvB complex plays an important role in the rescue of blocked DNA replication forks via replication fork reversal (RFR). RuvA specifically binds to HJ cruciform DNA, conferring on it an open structure. The RuvB hexamer acts as an ATP-dependent pump, pulling dsDNA into and through the RuvAB complex. HJ branch migration allows RuvC to scan DNA until it finds its consensus sequence, where it cleaves and resolves the cruciform DNA. The protein is Holliday junction branch migration complex subunit RuvA of Helicobacter pylori (strain G27).